The chain runs to 154 residues: Myoglobin (154 aa).

The region spanning 2-148 (GLSDGEWQMV…FRNDIAAKYK (147 aa)) is the Globin domain. Ser-4 and Ser-32 each carry phosphoserine. A nitrite-binding site is contributed by His-65. His-65 provides a ligand contact to O2. Thr-68 is modified (phosphothreonine). Residue His-94 participates in heme b binding. A phosphoserine mark is found at Ser-121 and Ser-133.

The protein belongs to the globin family. As to quaternary structure, monomeric.

Its subcellular location is the cytoplasm. The protein localises to the sarcoplasm. The enzyme catalyses Fe(III)-heme b-[protein] + nitric oxide + H2O = Fe(II)-heme b-[protein] + nitrite + 2 H(+). It carries out the reaction H2O2 + AH2 = A + 2 H2O. Functionally, monomeric heme protein which primary function is to store oxygen and facilitate its diffusion within muscle tissues. Reversibly binds oxygen through a pentacoordinated heme iron and enables its timely and efficient release as needed during periods of heightened demand. Depending on the oxidative conditions of tissues and cells, and in addition to its ability to bind oxygen, it also has a nitrite reductase activity whereby it regulates the production of bioactive nitric oxide. Under stress conditions, like hypoxia and anoxia, it also protects cells against reactive oxygen species thanks to its pseudoperoxidase activity. The polypeptide is Myoglobin (Rattus norvegicus (Rat)).